A 1526-amino-acid polypeptide reads, in one-letter code: DNA topoisomerase 2-alpha (1526 aa).

The residue at position 1 (M1) is an N-acetylmethionine. A Phosphoserine modification is found at S4. A Glycyl lysine isopeptide (Lys-Gly) (interchain with G-Cter in SUMO2) cross-link involves residue K17. Residues N90, N118, and 146-148 contribute to the ATP site; that span reads SSN. Glycyl lysine isopeptide (Lys-Gly) (interchain with G-Cter in SUMO2) cross-links involve residues K154 and K155. 159 to 166 is a binding site for ATP; the sequence is GRNGYGAK. T280 bears the Phosphothreonine mark. The interval 340–342 is interaction with DNA; that stretch reads KKK. A Glycyl lysine isopeptide (Lys-Gly) (interchain with G-Cter in SUMO2) cross-link involves residue K350. 374–376 is an ATP binding site; that stretch reads QTK. Glycyl lysine isopeptide (Lys-Gly) (interchain with G-Cter in SUMO2) cross-links involve residues K384, K395, K414, K416, K423, and K438. In terms of domain architecture, Toprim spans 453–570; that stretch reads CTLILTEGDS…SLLRHRFLEE (118 aa). Mg(2+) is bound at residue E459. Glycyl lysine isopeptide (Lys-Gly) (interchain with G-Cter in SUMO2) cross-links involve residues K464, K478, and K527. D539 and D541 together coordinate Mg(2+). Residues K582, K597, K612, K620, K623, K630, K637, K653, K660, and K674 each participate in a glycyl lysine isopeptide (Lys-Gly) (interchain with G-Cter in SUMO2) cross-link. The region spanning 713–1168 is the Topo IIA-type catalytic domain; sequence IPSMVDGLKP…TPSDLWKEDL (456 aa). Y803 (O-(5'-phospho-DNA)-tyrosine intermediate) is an active-site residue. Positions 988–997 are interaction with DNA; the sequence is KLQTSLTCNS. A Glycyl lysine isopeptide (Lys-Gly) (interchain with G-Cter in SUMO2) cross-link involves residue K1073. The span at 1087–1096 shows a compositional bias: basic and acidic residues; sequence AWKEAQQKVP. Residues 1087–1120 are disordered; it reads AWKEAQQKVPEEEENEENEESESESTSPAAESGP. Over residues 1097 to 1109 the composition is skewed to acidic residues; that stretch reads EEEENEENEESES. Glycyl lysine isopeptide (Lys-Gly) (interchain with G-Cter in SUMO2) cross-links involve residues K1193 and K1201. S1210 bears the Phosphoserine mark. The interval 1229–1526 is disordered; the sequence is EKKIRRKIKS…YLEESDDDLF (298 aa). A Glycyl lysine isopeptide (Lys-Gly) (interchain with G-Cter in SUMO1); alternate cross-link involves residue K1237. Residue K1237 forms a Glycyl lysine isopeptide (Lys-Gly) (interchain with G-Cter in SUMO2); alternate linkage. A Phosphothreonine modification is found at T1244. Positions 1254–1268 are enriched in basic and acidic residues; that stretch reads LRQRLEKRQKREPGT. Glycyl lysine isopeptide (Lys-Gly) (interchain with G-Cter in SUMO2) cross-links involve residues K1272, K1279, and K1282. S1291, S1293, S1295, and S1298 each carry phosphoserine. T1323 carries the phosphothreonine modification. Residues 1326 to 1346 are compositionally biased toward acidic residues; the sequence is LDSDDDFSGLDEKDEDEDFFP. S1328 and S1333 each carry phosphoserine. T1350 carries the post-translational modification Phosphothreonine. Residues K1359, K1363, and K1369 each participate in a glycyl lysine isopeptide (Lys-Gly) (interchain with G-Cter in SUMO2) cross-link. Phosphoserine is present on residues S1370 and S1373. Residue K1381 forms a Glycyl lysine isopeptide (Lys-Gly) (interchain with G-Cter in SUMO2) linkage. S1383 and S1387 each carry phosphoserine. Residues 1417-1427 show a composition bias toward polar residues; sequence TKGQSLTSTAG. A Glycyl lysine isopeptide (Lys-Gly) (interchain with G-Cter in SUMO2); alternate cross-link involves residue K1418. At K1418 the chain carries N6-acetyllysine; alternate. Positions 1429 to 1435 are interaction with PLSCR1; it reads KKRAVPK. K1438 is covalently cross-linked (Glycyl lysine isopeptide (Lys-Gly) (interchain with G-Cter in SUMO2); alternate). Residue K1438 is modified to N6-acetyllysine; alternate. Glycyl lysine isopeptide (Lys-Gly) (interchain with G-Cter in SUMO2) cross-links involve residues K1450 and K1455. Residues S1465, S1467, S1470, and S1472 each carry the phosphoserine modification. Residues K1480 and K1488 each participate in a glycyl lysine isopeptide (Lys-Gly) (interchain with G-Cter in SUMO2) cross-link. Residues 1487-1498 show a composition bias toward basic and acidic residues; it reads LKGEERDFHVDL. S1521 is subject to Phosphoserine.

It belongs to the type II topoisomerase family. As to quaternary structure, homodimer. Interacts with COPS5. Interacts with RECQL5; this stimulates DNA decatenation. Interacts with SETMAR; stimulates the topoisomerase activity. Interacts with DHX9; this interaction occurs in a E2 enzyme UBE2I- and RNA-dependent manner, negatively regulates DHX9-mediated double-stranded DNA and RNA duplex helicase activity and stimulates TOP2A-mediated supercoiled DNA relaxation activity. Interacts with HNRNPU (via C-terminus); this interaction protects the topoisomerase TOP2A from degradation and positively regulates the relaxation of supercoiled DNA in a RNA-dependent manner. Interacts with MCM3AP. Interacts with ERCC6. Interacts with PLSCR1. Interacts with GCNA; this interaction allows the resolution of topoisomerase II (TOP2A) DNA-protein cross-links. Interacts with POL1RA/RPA1 (via dock II) and UBTF in the context of Pol I complex; may assist Pol I transcription initiation by releasing supercoils occurring during DNA unwinding. Interacts with TPRN; TPRN interacts with a number of DNA damage response proteins, is recruited to sites of DNA damage and may play a role in DNA damage repair. Mg(2+) is required as a cofactor. Mn(2+) serves as cofactor. The cofactor is Ca(2+). Post-translationally, phosphorylation has no effect on catalytic activity.

It is found in the cytoplasm. Its subcellular location is the nucleus. The protein resides in the nucleoplasm. The protein localises to the nucleolus. It carries out the reaction ATP-dependent breakage, passage and rejoining of double-stranded DNA.. In terms of biological role, key decatenating enzyme that alters DNA topology by binding to two double-stranded DNA molecules, generating a double-stranded break in one of the strands, passing the intact strand through the broken strand, and religating the broken strand. May play a role in regulating the period length of BMAL1 transcriptional oscillation. This chain is DNA topoisomerase 2-alpha (Top2a), found in Rattus norvegicus (Rat).